A 21-amino-acid polypeptide reads, in one-letter code: uncharacterized protein (21 aa).

This is an uncharacterized protein from Dictyostelium discoideum (Social amoeba).